The following is a 170-amino-acid chain: Mitotic-spindle organizing protein 2B (170 aa).

2 disordered regions span residues 1 to 26 (MSRG…SPDA) and 102 to 170 (SADS…GSST). Residues 8–20 (GSQAMASSQAAGP) show a composition bias toward low complexity. Positions 123–132 (PNPTTSTTQG) are enriched in polar residues. The span at 151–170 (SGSRMQKSSSSGKSSGGSST) shows a compositional bias: low complexity.

The protein belongs to the MOZART2 family. As to quaternary structure, part of the gamma-tubulin complex. Interacts with TUBG1.

The protein resides in the cytoplasm. It localises to the cytoskeleton. The protein localises to the microtubule organizing center. It is found in the centrosome. Its subcellular location is the spindle. This Xenopus tropicalis (Western clawed frog) protein is Mitotic-spindle organizing protein 2B (mzt2b).